A 336-amino-acid chain; its full sequence is Lipoyl synthase (336 aa).

7 residues coordinate [4Fe-4S] cluster: Cys-81, Cys-86, Cys-92, Cys-107, Cys-111, Cys-114, and Ser-323. The 220-residue stretch at 93–312 folds into the Radical SAM core domain; that stretch reads FGHGTATFMI…EDYGYELGFS (220 aa).

The protein belongs to the radical SAM superfamily. Lipoyl synthase family. [4Fe-4S] cluster is required as a cofactor.

The protein resides in the cytoplasm. The catalysed reaction is [[Fe-S] cluster scaffold protein carrying a second [4Fe-4S](2+) cluster] + N(6)-octanoyl-L-lysyl-[protein] + 2 oxidized [2Fe-2S]-[ferredoxin] + 2 S-adenosyl-L-methionine + 4 H(+) = [[Fe-S] cluster scaffold protein] + N(6)-[(R)-dihydrolipoyl]-L-lysyl-[protein] + 4 Fe(3+) + 2 hydrogen sulfide + 2 5'-deoxyadenosine + 2 L-methionine + 2 reduced [2Fe-2S]-[ferredoxin]. It participates in protein modification; protein lipoylation via endogenous pathway; protein N(6)-(lipoyl)lysine from octanoyl-[acyl-carrier-protein]: step 2/2. Its function is as follows. Catalyzes the radical-mediated insertion of two sulfur atoms into the C-6 and C-8 positions of the octanoyl moiety bound to the lipoyl domains of lipoate-dependent enzymes, thereby converting the octanoylated domains into lipoylated derivatives. The protein is Lipoyl synthase of Stenotrophomonas maltophilia (strain K279a).